Reading from the N-terminus, the 503-residue chain is Glycerol kinase (503 aa).

Thr14 contributes to the ADP binding site. ATP is bound by residues Thr14, Thr15, and Ser16. Thr14 contacts sn-glycerol 3-phosphate. Residue Arg18 participates in ADP binding. Arg84, Glu85, Tyr136, and Asp246 together coordinate sn-glycerol 3-phosphate. Glycerol-binding residues include Arg84, Glu85, Tyr136, Asp246, and Gln247. ADP contacts are provided by Thr268 and Gly311. ATP is bound by residues Thr268, Gly311, Gln315, and Gly412. ADP is bound by residues Gly412 and Asn416.

It belongs to the FGGY kinase family. As to quaternary structure, homotetramer and homodimer (in equilibrium). Heterodimer with EIIA-Glc. Binds 1 zinc ion per glycerol kinase EIIA-Glc dimer. The zinc ion is important for dimerization.

It carries out the reaction glycerol + ATP = sn-glycerol 3-phosphate + ADP + H(+). The protein operates within polyol metabolism; glycerol degradation via glycerol kinase pathway; sn-glycerol 3-phosphate from glycerol: step 1/1. Activity of this regulatory enzyme is affected by several metabolites. Allosterically and non-competitively inhibited by fructose 1,6-bisphosphate (FBP) and unphosphorylated phosphocarrier protein EIIA-Glc (III-Glc), an integral component of the bacterial phosphotransferase (PTS) system. Functionally, key enzyme in the regulation of glycerol uptake and metabolism. Catalyzes the phosphorylation of glycerol to yield sn-glycerol 3-phosphate. This Klebsiella pneumoniae (strain 342) protein is Glycerol kinase.